Consider the following 227-residue polypeptide: Biosynthetic peptidoglycan transglycosylase (227 aa).

A helical membrane pass occupies residues Val7–Gly27.

Belongs to the glycosyltransferase 51 family.

It is found in the cell inner membrane. It carries out the reaction [GlcNAc-(1-&gt;4)-Mur2Ac(oyl-L-Ala-gamma-D-Glu-L-Lys-D-Ala-D-Ala)](n)-di-trans,octa-cis-undecaprenyl diphosphate + beta-D-GlcNAc-(1-&gt;4)-Mur2Ac(oyl-L-Ala-gamma-D-Glu-L-Lys-D-Ala-D-Ala)-di-trans,octa-cis-undecaprenyl diphosphate = [GlcNAc-(1-&gt;4)-Mur2Ac(oyl-L-Ala-gamma-D-Glu-L-Lys-D-Ala-D-Ala)](n+1)-di-trans,octa-cis-undecaprenyl diphosphate + di-trans,octa-cis-undecaprenyl diphosphate + H(+). The protein operates within cell wall biogenesis; peptidoglycan biosynthesis. Peptidoglycan polymerase that catalyzes glycan chain elongation from lipid-linked precursors. The polypeptide is Biosynthetic peptidoglycan transglycosylase (Rhodopseudomonas palustris (strain HaA2)).